The primary structure comprises 1522 residues: Myosin-15 (1522 aa).

The 50-residue stretch at 12–61 (RKGDKVWVEDKDLAWIAADVLDSFDNKLHVETSTGKKVFVSPEKLFRRDP) folds into the Myosin N-terminal SH3-like domain. A Myosin motor domain is found at 67-737 (NGVDDMTKLT…QIGILDSRRA (671 aa)). Residues 161–168 (GESGAGKT) and 214–222 (NDNSSRFGK) each bind ATP. Actin-binding regions lie at residues 499 to 533 (LIEK…FQNF), 535 to 558 (FHPR…AGKV), 593 to 618 (FPSA…KQQL), and 618 to 640 (LQAL…KPNS). IQ domains follow at residues 763–792 (ARAS…AAAA), 788–817 (NAAA…AAIV), 811–840 (LVSA…HRAA), 836–865 (EHRA…SIIA), and 859–888 (RQSS…VANE). The stretch at 889–1059 (AGALRLAKTK…NQVLMQKTLI (171 aa)) forms a coiled coil. Positions 1164–1456 (NIIIEGINEA…VSQMRVLVDK (293 aa)) constitute a Dilute domain.

This sequence belongs to the TRAFAC class myosin-kinesin ATPase superfamily. Myosin family. Plant myosin class XI subfamily. In terms of assembly, homodimer. Interacts with MYOB1 and MYOB7. Interacts with WIT1 and WIT2. Core component of the LINC complex which is composed of inner nuclear membrane SUN domain-containing proteins coupled to outer nuclear membrane WIP and WIT proteins. The LINC complex also involves nucleoskeletal proteins CRWN/LINC and possibly KAKU4 and the cytoskeletal myosin KAKU1.

Its subcellular location is the cytoplasm. It is found in the nucleus membrane. Myosin heavy chain that is required for the cell cycle-regulated transport of various organelles and proteins for their segregation. Functions by binding with its tail domain to receptor proteins on organelles and exerting force with its N-terminal motor domain against actin filaments, thereby transporting its cargo along polarized actin cables. Involved in trafficking of Golgi stacks and mitochondria. Plays a role in nuclear shape determination. Drives nuclear movement along actin filaments. As component of the SUN-WIP-WIT2-KAKU1 complex, mediates the transfer of cytoplasmic forces to the nuclear envelope (NE), leading to nuclear shape changes. This Arabidopsis thaliana (Mouse-ear cress) protein is Myosin-15 (XI-I).